The primary structure comprises 283 residues: Glutamate racemase (283 aa).

Residues 28 to 29 and 60 to 61 each bind substrate; these read DS and YG. The active-site Proton donor/acceptor is the cysteine 92. A substrate-binding site is contributed by 93 to 94; that stretch reads NS. Catalysis depends on cysteine 204, which acts as the Proton donor/acceptor. A substrate-binding site is contributed by 205–206; that stretch reads TH.

It belongs to the aspartate/glutamate racemases family.

The enzyme catalyses L-glutamate = D-glutamate. The protein operates within cell wall biogenesis; peptidoglycan biosynthesis. Functionally, provides the (R)-glutamate required for cell wall biosynthesis. The chain is Glutamate racemase from Erwinia tasmaniensis (strain DSM 17950 / CFBP 7177 / CIP 109463 / NCPPB 4357 / Et1/99).